The chain runs to 101 residues: Small ribosomal subunit protein uS14 (101 aa).

The protein belongs to the universal ribosomal protein uS14 family. As to quaternary structure, part of the 30S ribosomal subunit. Contacts proteins S3 and S10.

Functionally, binds 16S rRNA, required for the assembly of 30S particles and may also be responsible for determining the conformation of the 16S rRNA at the A site. The sequence is that of Small ribosomal subunit protein uS14 from Vibrio campbellii (strain ATCC BAA-1116).